The following is a 226-amino-acid chain: Oxaloacetate tautomerase FAHD2, mitochondrial (226 aa).

Residues 1–30 constitute a mitochondrion transit peptide; sequence MAAAAQRLLAASTKIVGVGRNFVAHAKELG. Mg(2+) contacts are provided by Glu-69, Glu-71, and Asp-100.

This sequence belongs to the FAH family. Requires Mg(2+) as cofactor. The cofactor is Mn(2+).

The protein localises to the mitochondrion. The enzyme catalyses oxaloacetate = enol-oxaloacetate. Functionally, tautomerase that converts enol-oxaloacetate, a strong inhibitor of succinate dehydrogenase, to the physiological keto form of oxaloacetate. This is Oxaloacetate tautomerase FAHD2, mitochondrial from Oryza sativa subsp. japonica (Rice).